The sequence spans 376 residues: CC-adding tRNA nucleotidyltransferase (376 aa).

26 to 29 lines the CTP pocket; it reads GAVR. Mg(2+)-binding residues include aspartate 39 and aspartate 41. Residues 94–95, asparagine 99, 136–145, and arginine 176 each bind CTP; these read RD and DPLRMLRAAR.

Belongs to the tRNA nucleotidyltransferase/poly(A) polymerase family. Requires Mg(2+) as cofactor.

It carries out the reaction a tRNA precursor + 2 CTP = a tRNA with a 3' CC end + 2 diphosphate. In terms of biological role, tRNA nucleotidyltransferase involved in the synthesis of the tRNA CCA terminus. Adds the two cytidine residues to tRNA. The polypeptide is CC-adding tRNA nucleotidyltransferase (Shouchella clausii (strain KSM-K16) (Alkalihalobacillus clausii)).